A 234-amino-acid chain; its full sequence is Cell adhesion molecule CEACAM15 (234 aa).

The N-terminal stretch at 1–32 is a signal peptide; the sequence is MGAETMESPSLFLCKGLLLTASLLICWNWSTA. 4 N-linked (GlcNAc...) asparagine glycosylation sites follow: Asn28, Asn75, Asn151, and Asn184. Residues 146 to 226 form the Ig-like C2-type domain; sequence PYLQLNHTRL…NSFSSKKSYP (81 aa). Cys165 and Cys213 are disulfide-bonded.

It belongs to the immunoglobulin superfamily. CEA family. As to expression, detected in placenta.

This chain is Cell adhesion molecule CEACAM15, found in Mus musculus (Mouse).